Here is a 468-residue protein sequence, read N- to C-terminus: MTQQIGVVGLAVMGKNLAWNIESRGYSVSVYNRSRQKTDEMVKESPGREIYPTYSLEEFVESLEKPRKILLMVKAGPATDATIDGLLPLLDDDDILIDGGNTNYQDTIRRNKALAESSINFIGMGVSGGEIGALTGPSLMPGGQKDAYNKVSDILDAIAAKAQDGASCVTYIGPNGAGHYVKMVHNGIEYADMQLIAESYAMMKDLLGMSHKEISQTFKEWNAGELESYLIEITGDIFNKLDDDNEALVEKILDTAGQKGTGKWTSINALELGVPLTIITESVFARFISSIKEERVTASKSLKGPKAHFEGDKKTFLEKIRKALYMSKICSYAQGFAQMRKASEDNEWNLKLGELAMIWREGCIIRAQFLQKIKDAYDNNENLQNLLLDPYFKNIVMEYQDALREVVATSVYNGVPTPGFSASINYYDSYRSEDLPANLIQAQRDYFGAHTYERKDREGIFHTQWVEE.

NADP(+) is bound by residues 9–14, 32–34, 73–75, and Asn-101; these read GLAVMG, NRS, and VKA. Substrate contacts are provided by residues Asn-101 and 127–129; that span reads SGG. Lys-182 functions as the Proton acceptor in the catalytic mechanism. 185 to 186 serves as a coordination point for substrate; the sequence is HN. Glu-189 (proton donor) is an active-site residue. Positions 190, 259, 286, 444, and 450 each coordinate substrate.

The protein belongs to the 6-phosphogluconate dehydrogenase family. Homodimer.

It carries out the reaction 6-phospho-D-gluconate + NADP(+) = D-ribulose 5-phosphate + CO2 + NADPH. Its pathway is carbohydrate degradation; pentose phosphate pathway; D-ribulose 5-phosphate from D-glucose 6-phosphate (oxidative stage): step 3/3. Its function is as follows. Catalyzes the oxidative decarboxylation of 6-phosphogluconate to ribulose 5-phosphate and CO(2), with concomitant reduction of NADP to NADPH. In Staphylococcus epidermidis (strain ATCC 35984 / DSM 28319 / BCRC 17069 / CCUG 31568 / BM 3577 / RP62A), this protein is 6-phosphogluconate dehydrogenase, decarboxylating (gnd).